The following is a 387-amino-acid chain: 3-ketoacyl-CoA thiolase (387 aa).

The active-site Acyl-thioester intermediate is the Cys91. Catalysis depends on proton acceptor residues His343 and Cys373.

This sequence belongs to the thiolase-like superfamily. Thiolase family. In terms of assembly, heterotetramer of two alpha chains (FadB) and two beta chains (FadA).

It localises to the cytoplasm. The catalysed reaction is an acyl-CoA + acetyl-CoA = a 3-oxoacyl-CoA + CoA. It participates in lipid metabolism; fatty acid beta-oxidation. Functionally, catalyzes the final step of fatty acid oxidation in which acetyl-CoA is released and the CoA ester of a fatty acid two carbons shorter is formed. The protein is 3-ketoacyl-CoA thiolase of Shewanella baltica (strain OS185).